The sequence spans 370 residues: Metalloproteinase (370 aa).

An N-terminal signal peptide occupies residues M1–A15. Positions I170–F370 constitute a Peptidase M12B domain. N-linked (GalNAc...) asparagine glycosylation occurs at N226. H320 serves as a coordination point for Zn(2+). E321 is an active-site residue. Positions 324 and 330 each coordinate Zn(2+).

This sequence belongs to the venom metalloproteinase (M12B) family. As to expression, expressed by the venom gland.

It localises to the secreted. Its function is as follows. Metalloprotease that may disrupt the cell matrix and the process of clotting blood or hemolymph. The polypeptide is Metalloproteinase (Tityus obscurus (Amazonian scorpion)).